The sequence spans 301 residues: Phosducin-like protein (301 aa).

The residue at position 2 (Thr-2) is an N-acetylthreonine. Positions 17–60 (YSTSEDEDSDHEDKDRGRGAPAISSTPAEAELAGEGISINTGPK) are disordered. 5 positions are modified to phosphoserine: Ser-20, Ser-25, Ser-226, Ser-293, and Ser-296. One can recognise a Phosducin domain in the interval 36 to 299 (APAISSTPAE…TCHSEDSDLE (264 aa)). The segment at 158–301 (FKQVFEIPSG…HSEDSDLEID (144 aa)) is thioredoxin fold.

Belongs to the phosducin family. As to quaternary structure, forms a complex with the beta and gamma subunits of the GTP-binding protein, transducin. Interacts with the CCT chaperonin complex.

It is found in the cell projection. It localises to the cilium. Functions as a co-chaperone for CCT in the assembly of heterotrimeric G protein complexes, facilitates the assembly of both Gbeta-Ggamma and RGS-Gbeta5 heterodimers. Also acts as a positive regulator of hedgehog signaling and regulates ciliary function. The chain is Phosducin-like protein (Pdcl) from Mus musculus (Mouse).